A 155-amino-acid chain; its full sequence is D-aminoacyl-tRNA deacylase (155 aa).

The Gly-cisPro motif, important for rejection of L-amino acids motif lies at 137 to 138 (GP).

This sequence belongs to the DTD family. As to quaternary structure, homodimer.

Its subcellular location is the cytoplasm. The enzyme catalyses glycyl-tRNA(Ala) + H2O = tRNA(Ala) + glycine + H(+). The catalysed reaction is a D-aminoacyl-tRNA + H2O = a tRNA + a D-alpha-amino acid + H(+). An aminoacyl-tRNA editing enzyme that deacylates mischarged D-aminoacyl-tRNAs. Also deacylates mischarged glycyl-tRNA(Ala), protecting cells against glycine mischarging by AlaRS. Acts via tRNA-based rather than protein-based catalysis; rejects L-amino acids rather than detecting D-amino acids in the active site. By recycling D-aminoacyl-tRNA to D-amino acids and free tRNA molecules, this enzyme counteracts the toxicity associated with the formation of D-aminoacyl-tRNA entities in vivo and helps enforce protein L-homochirality. This Paracidovorax citrulli (strain AAC00-1) (Acidovorax citrulli) protein is D-aminoacyl-tRNA deacylase.